We begin with the raw amino-acid sequence, 921 residues long: uncharacterized protein (921 aa).

The interval M334 to F628 is kinase-like. The span at G401–G494 shows a compositional bias: low complexity. 2 disordered regions span residues G401–N499 and N664–S711.

This is an uncharacterized protein from Dictyostelium discoideum (Social amoeba).